The primary structure comprises 212 residues: Methylthioribulose-1-phosphate dehydratase (212 aa).

His-97 and His-99 together coordinate Zn(2+).

The protein belongs to the aldolase class II family. MtnB subfamily. In terms of assembly, homotetramer. Zn(2+) serves as cofactor.

It carries out the reaction 5-(methylsulfanyl)-D-ribulose 1-phosphate = 5-methylsulfanyl-2,3-dioxopentyl phosphate + H2O. The protein operates within amino-acid biosynthesis; L-methionine biosynthesis via salvage pathway; L-methionine from S-methyl-5-thio-alpha-D-ribose 1-phosphate: step 2/6. Its function is as follows. Catalyzes the dehydration of methylthioribulose-1-phosphate (MTRu-1-P) into 2,3-diketo-5-methylthiopentyl-1-phosphate (DK-MTP-1-P). In Bacillus cereus (strain B4264), this protein is Methylthioribulose-1-phosphate dehydratase.